A 156-amino-acid polypeptide reads, in one-letter code: Glycine cleavage system H protein 2, mitochondrial (156 aa).

Residues 1 to 23 constitute a mitochondrion transit peptide; the sequence is MACRLFWASRVASHLRISVAQRG. In terms of domain architecture, Lipoyl-binding spans 47-129; sequence KATFGITDHA…YEQGWIIKVE (83 aa). K88 carries the post-translational modification N6-lipoyllysine. S131 bears the Phosphoserine mark.

Belongs to the GcvH family. The glycine cleavage system is composed of four proteins: P, T, L and H. It depends on (R)-lipoate as a cofactor.

The protein localises to the mitochondrion. The glycine decarboxylase (GDC) or glycine cleavage system catalyzes the degradation of glycine. The H protein shuttles the methylamine group of glycine from the P protein to the T protein. In Arabidopsis thaliana (Mouse-ear cress), this protein is Glycine cleavage system H protein 2, mitochondrial (GDH2).